Reading from the N-terminus, the 763-residue chain is Thyrotropin receptor (763 aa).

The signal sequence occupies residues Met-1–Gly-21. Residues Lys-22–Gly-412 lie on the Extracellular side of the membrane. A disulfide bridge connects residues Cys-31 and Cys-41. N-linked (GlcNAc...) asparagine glycosylation is found at Asn-77 and Asn-99. LRR repeat units follow at residues Leu-100–Glu-124, Leu-125–Thr-150, Asp-151–Gly-174, Cys-176–Gly-199, Lys-201–Gly-223, Tyr-225–His-248, and Pro-264–Asn-288. Residues Asn-177 and Asn-198 are each glycosylated (N-linked (GlcNAc...) asparagine). The N-linked (GlcNAc...) asparagine glycan is linked to Asn-302. At Tyr-384 the chain carries Sulfotyrosine. A helical membrane pass occupies residues Tyr-413–Thr-440. The Cytoplasmic segment spans residues Ser-441 to Arg-449. Residues Phe-450–Val-472 form a helical membrane-spanning segment. The Extracellular segment spans residues Asp-473 to Cys-493. Residues Cys-493 and Cys-568 are joined by a disulfide bond. A helical membrane pass occupies residues Asn-494 to Leu-516. At Glu-517–His-536 the chain is on the cytoplasmic side. A helical transmembrane segment spans residues Ala-537–Ile-559. The Extracellular segment spans residues Ser-560 to Leu-579. Residues Ala-580–Val-601 traverse the membrane as a helical segment. The Cytoplasmic segment spans residues Lys-602–Arg-624. Residues Met-625–Met-648 form a helical membrane-spanning segment. Topologically, residues Asn-649–Lys-659 are extracellular. A helical membrane pass occupies residues Ile-660 to Thr-681. At Lys-682 to Leu-763 the chain is on the cytoplasmic side. A PDZ-binding motif is present at residues Thr-761–Leu-763.

It belongs to the G-protein coupled receptor 1 family. FSH/LSH/TSH subfamily. In terms of assembly, interacts with heterodimer GPHA2:GPHB5; this interaction stimulates cAMP production. Interacts (via the PDZ-binding motif) with SCRIB; regulates TSHR trafficking and function. Glycosylated. Post-translationally, sulfated. Sulfation on Tyr-384 plays a role in thyrotropin receptor binding and activation.

It localises to the cell membrane. It is found in the basolateral cell membrane. Functionally, receptor for the thyroid-stimulating hormone (TSH) or thyrotropin. Also acts as a receptor for the heterodimeric glycoprotein hormone (GPHA2:GPHB5) or thyrostimulin. The activity of this receptor is mediated by G proteins which activate adenylate cyclase. Plays a central role in controlling thyroid cell metabolism. The chain is Thyrotropin receptor (TSHR) from Felis catus (Cat).